Here is a 208-residue protein sequence, read N- to C-terminus: Putative adhesin P1-like protein MPN_468 (208 aa).

Disordered regions lie at residues 29–49 (TNGS…VAPT) and 97–172 (DSKT…NLTP). Positions 100-132 (TQNNTTTNENHTKFASATGSGQQQGSTTTTSAG) are enriched in low complexity. Positions 145–158 (SGNSISVQEATSGD) are enriched in polar residues. Residues 159–172 (NLTNYTNLPPNLTP) are compositionally biased toward low complexity.

The protein belongs to the adhesin P1 family.

This Mycoplasma pneumoniae (strain ATCC 29342 / M129 / Subtype 1) (Mycoplasmoides pneumoniae) protein is Putative adhesin P1-like protein MPN_468.